Here is a 78-residue protein sequence, read N- to C-terminus: Putative membrane protein insertion efficiency factor (78 aa).

The protein belongs to the UPF0161 family.

It is found in the cell membrane. Its function is as follows. Could be involved in insertion of integral membrane proteins into the membrane. The polypeptide is Putative membrane protein insertion efficiency factor (Limosilactobacillus reuteri (strain DSM 20016) (Lactobacillus reuteri)).